The primary structure comprises 319 residues: Thiamine-monophosphate kinase (319 aa).

Residues Asp28, Thr43, Thr44, and Asp45 each contribute to the Mg(2+) site. Residue His52 participates in substrate binding. Residue Asp73 coordinates Mg(2+). ATP-binding positions include Tyr104, 121-122, and Arg145; that span reads GD. Asp122 lines the Mg(2+) pocket. Residue Asp218 participates in Mg(2+) binding. Ser220 lines the ATP pocket. Mg(2+) is bound at residue Asp221. Substrate is bound by residues Glu268 and Tyr315.

The protein belongs to the thiamine-monophosphate kinase family.

It carries out the reaction thiamine phosphate + ATP = thiamine diphosphate + ADP. It participates in cofactor biosynthesis; thiamine diphosphate biosynthesis; thiamine diphosphate from thiamine phosphate: step 1/1. Catalyzes the ATP-dependent phosphorylation of thiamine-monophosphate (TMP) to form thiamine-pyrophosphate (TPP), the active form of vitamin B1. This chain is Thiamine-monophosphate kinase, found in Methanocaldococcus jannaschii (strain ATCC 43067 / DSM 2661 / JAL-1 / JCM 10045 / NBRC 100440) (Methanococcus jannaschii).